The primary structure comprises 80 residues: Sulfur carrier protein TusA (80 aa).

The active-site Cysteine persulfide intermediate is the C17.

Belongs to the sulfur carrier protein TusA family.

The protein localises to the cytoplasm. In terms of biological role, sulfur carrier protein which probably makes part of a sulfur-relay system. This chain is Sulfur carrier protein TusA, found in Pseudomonas putida (strain W619).